Consider the following 105-residue polypeptide: Nucleoid-associated protein lin2851 (105 aa).

Residues 1–16 (MRGMGNMQGMMKQMQK) show a composition bias toward low complexity. Residues 1-23 (MRGMGNMQGMMKQMQKMQKEMAK) form a disordered region.

Belongs to the YbaB/EbfC family. Homodimer.

Its subcellular location is the cytoplasm. The protein localises to the nucleoid. Binds to DNA and alters its conformation. May be involved in regulation of gene expression, nucleoid organization and DNA protection. In Listeria innocua serovar 6a (strain ATCC BAA-680 / CLIP 11262), this protein is Nucleoid-associated protein lin2851.